The primary structure comprises 152 residues: Transcriptional regulator MraZ (152 aa).

2 SpoVT-AbrB domains span residues Ala5–Glu52 and Ala81–Thr124.

The protein belongs to the MraZ family. Forms oligomers.

The protein resides in the cytoplasm. Its subcellular location is the nucleoid. Negatively regulates its own expression and that of the subsequent genes in the proximal part of the division and cell wall (dcw) gene cluster. Acts by binding directly to DNA. May also regulate the expression of genes outside the dcw cluster. The protein is Transcriptional regulator MraZ of Salmonella gallinarum (strain 287/91 / NCTC 13346).